A 1424-amino-acid chain; its full sequence is S-layer protein A (1424 aa).

The first 24 residues, 1–24, serve as a signal peptide directing secretion; sequence MNKLVGLLVSSLFLASILIGIAPA. N-linked (GlcNAc...) asparagine glycans are attached at residues Asn-60, Asn-70, Asn-276, Asn-295, Asn-342, Asn-358, Asn-377, Asn-468, Asn-517, Asn-545, Asn-559, Asn-581, Asn-633, Asn-714, Asn-875, Asn-914, Asn-955, Asn-989, Asn-1018, Asn-1042, Asn-1093, Asn-1134, Asn-1197, Asn-1217, Asn-1252, Asn-1276, Asn-1304, and Asn-1419.

This sequence belongs to the Sulfolobales SlaA family. The mushroom-shaped unit cells of the Sulfolobales' S-layers may consist of three SlaB subunits and six SlaA subunits. In terms of processing, glycosylated. C-terminal glycosylation sites are modified with a heterogeneous family of glycans, with the largest having a composition Glc(1)Man(2)GlcNAc(2) plus 6-sulfoquinovose (QuiS).

It localises to the secreted. It is found in the cell wall. Its subcellular location is the S-layer. Functionally, S-layer large protein. May form the highly ordered outer sheath. The sequence is that of S-layer protein A from Sulfolobus acidocaldarius (strain ATCC 33909 / DSM 639 / JCM 8929 / NBRC 15157 / NCIMB 11770).